Reading from the N-terminus, the 143-residue chain is Small ribosomal subunit protein bS6 (143 aa).

Residues 96–143 (VTEASPMAAAKEERRDDRREVKKDVAAAPVEAKEDSVEEKSEEAASEE) are disordered. Positions 105 to 143 (AKEERRDDRREVKKDVAAAPVEAKEDSVEEKSEEAASEE) are enriched in basic and acidic residues.

It belongs to the bacterial ribosomal protein bS6 family.

Functionally, binds together with bS18 to 16S ribosomal RNA. This is Small ribosomal subunit protein bS6 from Colwellia psychrerythraea (strain 34H / ATCC BAA-681) (Vibrio psychroerythus).